Reading from the N-terminus, the 72-residue chain is UPF0426 protein asl4034 (72 aa).

It belongs to the UPF0426 family.

The chain is UPF0426 protein asl4034 from Nostoc sp. (strain PCC 7120 / SAG 25.82 / UTEX 2576).